The chain runs to 228 residues: F-box protein At5g67140 (228 aa).

In terms of domain architecture, F-box spans Glu4–Thr51.

The protein is F-box protein At5g67140 of Arabidopsis thaliana (Mouse-ear cress).